The sequence spans 179 residues: Protein YjaZ (179 aa).

The chain is Protein YjaZ from Escherichia coli (strain K12).